The primary structure comprises 158 residues: Mitotic-spindle organizing protein 2B (158 aa).

Ser-34 carries the post-translational modification Phosphoserine. Positions 84 to 158 are disordered; that stretch reads RLASEPQDPA…PGKSPTRGST (75 aa). The segment covering 111–122 has biased composition (low complexity); sequence GSAALGGALALA. The segment covering 128–140 has biased composition (polar residues); the sequence is EGSSQRMPRQPSA. Ser-152 is subject to Phosphoserine.

This sequence belongs to the MOZART2 family. Associates with the gamma-tubulin ring complex (gTuRC) consisting of TUBGCP2, TUBGCP3, TUBGCP4, TUBGCP5 and TUBGCP6 and gamma-tubulin TUBG1 or TUBG2; within the complex, interacts with TUBGCP2; the interaction plays a role in gTuRC activation. Interacts with TUBG1.

The protein resides in the cytoplasm. It localises to the cytoskeleton. The protein localises to the microtubule organizing center. It is found in the centrosome. Its subcellular location is the spindle. In terms of biological role, required for the recruitment and the assembly of the gamma-tubulin ring complex (gTuRC) at the centrosome. The gTuRC regulates the minus-end nucleation of alpha-beta tubulin heterodimers that grow into microtubule protafilaments, a critical step in centrosome duplication and spindle formation. The protein is Mitotic-spindle organizing protein 2B (MZT2B) of Homo sapiens (Human).